The following is a 479-amino-acid chain: Fibrinogen beta chain (479 aa).

The signal sequence occupies residues 1–18; sequence MRHLWLLLLSVSLVQTQA. The disordered stretch occupies residues 20-82; it reads TTDSDKVDLS…VERKPPDAGG (63 aa). The tract at residues 33–35 is beta-chain polymerization, binding distal domain of another fibrin; it reads GHR. Composition is skewed to basic and acidic residues over residues 35–45 and 64–78; these read RPVDRRKEEPP and AKVDAGQKKVERKPP. Cystine bridges form between Cys-219–Cys-304 and Cys-229–Cys-258. Positions 220–476 constitute a Fibrinogen C-terminal domain; that stretch reads NIPVVSGKEC…RMSMKIRPVF (257 aa). Asn-382 carries an N-linked (GlcNAc...) asparagine glycan. Cys-412 and Cys-425 are disulfide-bonded.

Heterohexamer; disulfide linked. Contains 2 sets of 3 non-identical chains (alpha, beta and gamma). The 2 heterotrimers are in head to head conformation with the N-termini in a small central domain. Post-translationally, conversion of fibrinogen to fibrin is triggered by thrombin, which cleaves fibrinopeptides A and B from alpha and beta chains, and thus exposes the N-terminal polymerization sites responsible for the formation of the soft clot.

It localises to the secreted. Functionally, cleaved by the protease thrombin to yield monomers which, together with fibrinogen alpha (FGA) and fibrinogen gamma (FGG), polymerize to form an insoluble fibrin matrix. Fibrin has a major function in hemostasis as one of the primary components of blood clots. In addition, functions during the early stages of wound repair to stabilize the lesion and guide cell migration during re-epithelialization. Was originally thought to be essential for platelet aggregation, based on in vitro studies using anticoagulated blood. However subsequent studies have shown that it is not absolutely required for thrombus formation in vivo. Enhances expression of SELP in activated platelets. Maternal fibrinogen is essential for successful pregnancy. Fibrin deposition is also associated with infection, where it protects against IFNG-mediated hemorrhage. May also facilitate the antibacterial immune response via both innate and T-cell mediated pathways. The chain is Fibrinogen beta chain (Fgb) from Rattus norvegicus (Rat).